The primary structure comprises 245 residues: 1-(5-phosphoribosyl)-5-[(5-phosphoribosylamino)methylideneamino] imidazole-4-carboxamide isomerase (245 aa).

D7 serves as the catalytic Proton acceptor. The Proton donor role is filled by D129.

The protein belongs to the HisA/HisF family.

It localises to the cytoplasm. It catalyses the reaction 1-(5-phospho-beta-D-ribosyl)-5-[(5-phospho-beta-D-ribosylamino)methylideneamino]imidazole-4-carboxamide = 5-[(5-phospho-1-deoxy-D-ribulos-1-ylimino)methylamino]-1-(5-phospho-beta-D-ribosyl)imidazole-4-carboxamide. It participates in amino-acid biosynthesis; L-histidine biosynthesis; L-histidine from 5-phospho-alpha-D-ribose 1-diphosphate: step 4/9. In Erwinia tasmaniensis (strain DSM 17950 / CFBP 7177 / CIP 109463 / NCPPB 4357 / Et1/99), this protein is 1-(5-phosphoribosyl)-5-[(5-phosphoribosylamino)methylideneamino] imidazole-4-carboxamide isomerase.